Reading from the N-terminus, the 123-residue chain is Immunoglobulin lambda variable 5-37 (123 aa).

A signal peptide spans Met1–Ser19. The interval Gln20–Pro44 is framework-1. The region spanning Pro21–Ser123 is the Ig-like domain. Cys41 and Cys115 are joined by a disulfide. The complementarity-determining-1 stretch occupies residues Ser45–Asn53. Residues Ile54–Tyr70 are framework-2. Positions Tyr71–Lys77 are complementarity-determining-2. The framework-3 stretch occupies residues Gly78 to Cys115. Positions Met116–Ser123 are complementarity-determining-3.

As to quaternary structure, immunoglobulins are composed of two identical heavy chains and two identical light chains; disulfide-linked.

It is found in the secreted. It localises to the cell membrane. In terms of biological role, v region of the variable domain of immunoglobulin light chains that participates in the antigen recognition. Immunoglobulins, also known as antibodies, are membrane-bound or secreted glycoproteins produced by B lymphocytes. In the recognition phase of humoral immunity, the membrane-bound immunoglobulins serve as receptors which, upon binding of a specific antigen, trigger the clonal expansion and differentiation of B lymphocytes into immunoglobulins-secreting plasma cells. Secreted immunoglobulins mediate the effector phase of humoral immunity, which results in the elimination of bound antigens. The antigen binding site is formed by the variable domain of one heavy chain, together with that of its associated light chain. Thus, each immunoglobulin has two antigen binding sites with remarkable affinity for a particular antigen. The variable domains are assembled by a process called V-(D)-J rearrangement and can then be subjected to somatic hypermutations which, after exposure to antigen and selection, allow affinity maturation for a particular antigen. The polypeptide is Immunoglobulin lambda variable 5-37 (Homo sapiens (Human)).